The following is a 260-amino-acid chain: 4-hydroxy-tetrahydrodipicolinate reductase (260 aa).

NAD(+) contacts are provided by residues 12–17, 92–94, and 118–121; these read GFRGKM, GTT, and APNF. Catalysis depends on histidine 148, which acts as the Proton donor/acceptor. Histidine 149 provides a ligand contact to (S)-2,3,4,5-tetrahydrodipicolinate. The active-site Proton donor is lysine 152. 158–159 lines the (S)-2,3,4,5-tetrahydrodipicolinate pocket; that stretch reads GT.

This sequence belongs to the DapB family.

It localises to the cytoplasm. The enzyme catalyses (S)-2,3,4,5-tetrahydrodipicolinate + NAD(+) + H2O = (2S,4S)-4-hydroxy-2,3,4,5-tetrahydrodipicolinate + NADH + H(+). The catalysed reaction is (S)-2,3,4,5-tetrahydrodipicolinate + NADP(+) + H2O = (2S,4S)-4-hydroxy-2,3,4,5-tetrahydrodipicolinate + NADPH + H(+). The protein operates within amino-acid biosynthesis; L-lysine biosynthesis via DAP pathway; (S)-tetrahydrodipicolinate from L-aspartate: step 4/4. Functionally, catalyzes the conversion of 4-hydroxy-tetrahydrodipicolinate (HTPA) to tetrahydrodipicolinate. The chain is 4-hydroxy-tetrahydrodipicolinate reductase from Lactococcus lactis subsp. cremoris (strain SK11).